We begin with the raw amino-acid sequence, 368 residues long: 3-isopropylmalate dehydrogenase (368 aa).

Residue 77-88 (GPKWGTGAVRPE) coordinates NAD(+). The substrate site is built by Arg-95, Arg-105, Arg-134, and Asp-226. Mg(2+) contacts are provided by Asp-226, Asp-251, and Asp-255. 290–301 (GSAPDLPANKVN) is a binding site for NAD(+).

This sequence belongs to the isocitrate and isopropylmalate dehydrogenases family. As to quaternary structure, homodimer. Mg(2+) serves as cofactor. It depends on Mn(2+) as a cofactor.

It is found in the cytoplasm. It carries out the reaction (2R,3S)-3-isopropylmalate + NAD(+) = 4-methyl-2-oxopentanoate + CO2 + NADH. The protein operates within amino-acid biosynthesis; L-leucine biosynthesis; L-leucine from 3-methyl-2-oxobutanoate: step 3/4. In terms of biological role, catalyzes the oxidation of 3-carboxy-2-hydroxy-4-methylpentanoate (3-isopropylmalate) to 3-carboxy-4-methyl-2-oxopentanoate. The product decarboxylates to 4-methyl-2 oxopentanoate. This chain is 3-isopropylmalate dehydrogenase (LEU2), found in Kodamaea ohmeri (Yeast).